Here is a 342-residue protein sequence, read N- to C-terminus: Holliday junction branch migration complex subunit RuvB (342 aa).

The segment at 1-179 (MTNILSPEKS…FGIPMRLNFY (179 aa)) is large ATPase domain (RuvB-L). Residues Ile-18, Arg-19, Gly-60, Lys-63, Thr-64, Thr-65, 126–128 (EDF), Arg-169, Tyr-179, and Arg-216 each bind ATP. Residue Thr-64 participates in Mg(2+) binding. The segment at 180–250 (NTEELKQVLN…ICDFGLKRLT (71 aa)) is small ATPAse domain (RuvB-S). Residues 253–342 (SIGLDSNDYR…HQFNILNENE (90 aa)) are head domain (RuvB-H). Residues Arg-289, Arg-308, and Arg-313 each coordinate DNA.

Belongs to the RuvB family. As to quaternary structure, homohexamer. Forms an RuvA(8)-RuvB(12)-Holliday junction (HJ) complex. HJ DNA is sandwiched between 2 RuvA tetramers; dsDNA enters through RuvA and exits via RuvB. An RuvB hexamer assembles on each DNA strand where it exits the tetramer. Each RuvB hexamer is contacted by two RuvA subunits (via domain III) on 2 adjacent RuvB subunits; this complex drives branch migration. In the full resolvosome a probable DNA-RuvA(4)-RuvB(12)-RuvC(2) complex forms which resolves the HJ.

The protein resides in the cytoplasm. The catalysed reaction is ATP + H2O = ADP + phosphate + H(+). The RuvA-RuvB-RuvC complex processes Holliday junction (HJ) DNA during genetic recombination and DNA repair, while the RuvA-RuvB complex plays an important role in the rescue of blocked DNA replication forks via replication fork reversal (RFR). RuvA specifically binds to HJ cruciform DNA, conferring on it an open structure. The RuvB hexamer acts as an ATP-dependent pump, pulling dsDNA into and through the RuvAB complex. RuvB forms 2 homohexamers on either side of HJ DNA bound by 1 or 2 RuvA tetramers; 4 subunits per hexamer contact DNA at a time. Coordinated motions by a converter formed by DNA-disengaged RuvB subunits stimulates ATP hydrolysis and nucleotide exchange. Immobilization of the converter enables RuvB to convert the ATP-contained energy into a lever motion, pulling 2 nucleotides of DNA out of the RuvA tetramer per ATP hydrolyzed, thus driving DNA branch migration. The RuvB motors rotate together with the DNA substrate, which together with the progressing nucleotide cycle form the mechanistic basis for DNA recombination by continuous HJ branch migration. Branch migration allows RuvC to scan DNA until it finds its consensus sequence, where it cleaves and resolves cruciform DNA. The chain is Holliday junction branch migration complex subunit RuvB from Rickettsia typhi (strain ATCC VR-144 / Wilmington).